We begin with the raw amino-acid sequence, 835 residues long: BCL11 transcription factor A (835 aa).

The span at 1–12 (MSRRKQGKPQHL) shows a compositional bias: basic residues. The segment at 1–41 (MSRRKQGKPQHLSKREFSPEPLEAILTDDEPDHGPLGAPEG) is disordered. Positions 1 to 210 (MSRRKQGKPQ…SEHGSPLTPR (210 aa)) are required for nuclear body formation and for SUMO1 recruitment. A C2HC-type zinc finger spans residues 45–71 (LLTCGQCQMNFPLGDILIFIEHKRKQC). Cys-48, Cys-51, His-66, and Cys-71 together coordinate Zn(2+). Ser-86 carries the phosphoserine modification. Lys-123 participates in a covalent cross-link: Glycyl lysine isopeptide (Lys-Gly) (interchain with G-Cter in SUMO2). Phosphothreonine is present on Ile-162. Residue Lys-164 forms a Glycyl lysine isopeptide (Lys-Gly) (interchain with G-Cter in SUMO2) linkage. A C2H2-type 1 zinc finger spans residues 170-193 (YTCTTCKQPFTSAWFLLQHAQNTH). Phosphoserine is present on Ser-205. Pro-214 bears the Phosphothreonine mark. An Asymmetric dimethylarginine modification is found at Arg-271. The segment at 323–376 (AGNTSSPPLSPGRPSPMQRLLQPFQPGSKPPFLATPPLPPLQSAPPPSQPPVKS) is disordered. Ser-332 and Ser-337 each carry phosphoserine. Pro residues predominate over residues 355–372 (LATPPLPPLQSAPPPSQP). C2H2-type zinc fingers lie at residues 377-399 (KSCE…RRSH) and 405-429 (YKCN…THMH). The segment covering 421–430 (KRHMKTHMHK) has biased composition (basic residues). 3 disordered regions span residues 421–458 (KRHM…LVGS), 471–512 (KSEN…ERVD), and 572–619 (RSHL…GLSK). Residues 441–450 (GLSTASSPEP) show a composition bias toward polar residues. 2 positions are modified to phosphoserine: Ser-446 and Ser-447. Positions 482-506 (NGDEEEEEDDEEEEEEEEEEEEELT) are enriched in acidic residues. A compositionally biased stretch (basic and acidic residues) spans 574–584 (HLAEAEGHRDT). A Phosphoserine modification is found at Ser-608. Residue Lys-620 forms a Glycyl lysine isopeptide (Lys-Gly) (interchain with G-Cter in SUMO2) linkage. Ser-625 and Ser-630 each carry phosphoserine. Lys-634 participates in a covalent cross-link: Glycyl lysine isopeptide (Lys-Gly) (interchain with G-Cter in SUMO1). Positions 682–696 (SPFASSSEHSSENGS) are enriched in low complexity. Position 701 is a phosphothreonine (Thr-701). Residues 706–720 (LDGGISGRSGTGSGG) are compositionally biased toward gly residues. The DNA-binding stretch occupies residues 737-835 (EGRRSDTCEY…RVLNNDIKTE (99 aa)). The C2H2-type 4 zinc-finger motif lies at 742–764 (DTCEYCGKVFKNCSNLTVHRRSH). 4 residues coordinate Zn(2+): Cys-744, Cys-747, His-760, and His-764. Over residues 764 to 773 (HTGERPYKCE) the composition is skewed to polar residues. Residues 765 to 769 (TGERP) form a disordered region. The segment at 770 to 792 (YKCELCNYACAQSSKLTRHMKTH) adopts a C2H2-type 5 zinc-finger fold. Cys-772, Cys-775, His-788, and His-792 together coordinate Zn(2+). The disordered stretch occupies residues 793-799 (GQVGKDV). The C2H2-type 6 zinc-finger motif lies at 800 to 823 (YKCEICKMPFSVYSTLEKHMKKWH). Zn(2+)-binding residues include Cys-802, Cys-805, His-818, and His-823.

As to quaternary structure, homotetrameric; self-associates via C2HC-type zinc finger domain. Interacts with MTA2, a component of the nucleosome remodeling and deacetylase (NuRD) repressor complex. Interacts with NR2F1, PIAS3, NR2F2 and NR2F6. Interacts with TBR1. Post-translationally, sumoylated with SUMO1. As to expression, isoforms are expressed in a tissue-specific fashion. Isoforms 1, isoform 2, and isoform 3 are expressed at similar levels in testis, kidney and spleen. Isoform 1 is expressed in the stomach, and isoform 2 is expressed exclusively in the lung. Overexpression following proviral integration in hematopoietic cells results in the generation of myeloid leukemia.

It localises to the cytoplasm. It is found in the nucleus. Functionally, transcription factor. Associated with the BAF SWI/SNF chromatin remodeling complex. Binds to the 5'-TGACCA-3' sequence motif in regulatory regions of target genes. Involved in brain development. May play a role in hematopoiesis. Essential factor in lymphopoiesis, required for B-cell formation in fetal liver. May function as a modulator of the transcriptional repression activity of NR2F2. The sequence is that of BCL11 transcription factor A (Bcl11a) from Mus musculus (Mouse).